The sequence spans 134 residues: Small ribosomal subunit protein uS11 (134 aa).

Positions 1–21 are disordered; sequence MPPKSRQGAGRKVRRKEKKNV. Positions 9–21 are enriched in basic residues; that stretch reads AGRKVRRKEKKNV.

This sequence belongs to the universal ribosomal protein uS11 family. In terms of assembly, part of the 30S ribosomal subunit. Interacts with proteins S7 and S18. Binds to IF-3.

Functionally, located on the platform of the 30S subunit, it bridges several disparate RNA helices of the 16S rRNA. Forms part of the Shine-Dalgarno cleft in the 70S ribosome. The chain is Small ribosomal subunit protein uS11 from Thermobifida fusca (strain YX).